The primary structure comprises 141 residues: MKFFIVLVAALALAAPAMGKTFTRCSLAREMYALGVPKSELPQWTCIAEHESSYRTNVVGPTNSNGSNDYGIFQINNYYWCQPSNGRFSYNECHLSCDALLTDNISNSVTCARKIKSQQGWTAWSTWKYCSGSLPSINDCF.

An N-terminal signal peptide occupies residues 1–19 (MKFFIVLVAALALAAPAMG). Positions 20–141 (KTFTRCSLAR…GSLPSINDCF (122 aa)) constitute a C-type lysozyme domain. 4 disulfides stabilise this stretch: cysteine 25-cysteine 140, cysteine 46-cysteine 130, cysteine 81-cysteine 97, and cysteine 93-cysteine 111. Glutamate 51 is a catalytic residue. Asparagine 65 carries N-linked (GlcNAc...) asparagine glycosylation. Residue aspartate 69 is part of the active site. Asparagine 104 carries N-linked (GlcNAc...) asparagine glycosylation.

This sequence belongs to the glycosyl hydrolase 22 family.

It carries out the reaction Hydrolysis of (1-&gt;4)-beta-linkages between N-acetylmuramic acid and N-acetyl-D-glucosamine residues in a peptidoglycan and between N-acetyl-D-glucosamine residues in chitodextrins.. May not function as a self-defense protein, but as a digestive enzyme, probably in the gut of the insect body. Inactive towards Micrococcus luteus. Active toward glycol chitin. This is Lysozyme 1 from Musca domestica (House fly).